A 620-amino-acid chain; its full sequence is PAN2-PAN3 deadenylation complex subunit PAN3 (620 aa).

The C3H1-type zinc finger occupies 7–36; the sequence is SAKGTLCKNILIYGYCKYENKGCAFSHRRN. Disordered regions lie at residues 39–73 and 95–168; these read ANSG…QPST and VFVP…QPGP. 2 stretches are compositionally biased toward polar residues: residues 63–73 and 101–126; these read NVNTPSFQPST and TPAS…TVSN. Residues 226 to 482 form a pseudokinase domain region; the sequence is QSYPGGPEIV…LESYIRKHLA (257 aa). ATP-binding positions include Arg-274, 323–330, and 380–381; these read DYYPNAST and SK. The stretch at 483-521 forms a coiled coil; it reads IRLLDVVDMLEDSNDYLESQLSTELENARLVRLMTKINF. Residues 522 to 620 are knob domain; it reads IVDRPEWDNE…SVFRTITRGK (99 aa).

It belongs to the protein kinase superfamily. PAN3 family. As to quaternary structure, homodimer. Forms a heterotrimer with a catalytic subunit PAN2 to form the poly(A)-nuclease (PAN) deadenylation complex. Interacts (via PAM-2 motif) with poly(A)-binding protein PAB1 (via PABC domain), conferring substrate specificity of the enzyme complex.

The protein localises to the cytoplasm. Its function is as follows. Regulatory subunit of the poly(A)-nuclease (PAN) deadenylation complex, one of two cytoplasmic mRNA deadenylases involved in mRNA turnover. PAN specifically shortens poly(A) tails of RNA and the activity is stimulated by poly(A)-binding protein PAB1. PAN deadenylation is followed by rapid degradation of the shortened mRNA tails by the CCR4-NOT complex. Deadenylated mRNAs are then degraded by two alternative mechanisms, namely exosome-mediated 3'-5' exonucleolytic degradation, or deadenylation-dependent mRNA decaping and subsequent 5'-3' exonucleolytic degradation by XRN1. May also be involved in post-transcriptional maturation of mRNA poly(A) tails. PAN3 acts as a positive regulator for PAN activity, recruiting the catalytic subunit PAN2 to mRNA via its interaction with RNA and with PAB1. This chain is PAN2-PAN3 deadenylation complex subunit PAN3, found in Meyerozyma guilliermondii (strain ATCC 6260 / CBS 566 / DSM 6381 / JCM 1539 / NBRC 10279 / NRRL Y-324) (Yeast).